Reading from the N-terminus, the 912-residue chain is Protein translocase subunit SecA (912 aa).

Residues Gln87, 105 to 109, and Asp508 each bind ATP; that span reads GEGKT. Positions 855-912 are disordered; the sequence is QHQDAGGYGADEEVEQMQGGNAPVPVSQVTRDEPKVGRNDPCPCGSGKKYKHCHGQLS. Zn(2+)-binding residues include Cys896, Cys898, Cys907, and His908. Residues 902 to 912 show a composition bias toward basic residues; it reads KKYKHCHGQLS.

It belongs to the SecA family. In terms of assembly, monomer and homodimer. Part of the essential Sec protein translocation apparatus which comprises SecA, SecYEG and auxiliary proteins SecDF-YajC and YidC. It depends on Zn(2+) as a cofactor.

It is found in the cell inner membrane. The protein resides in the cytoplasm. The enzyme catalyses ATP + H2O + cellular proteinSide 1 = ADP + phosphate + cellular proteinSide 2.. Part of the Sec protein translocase complex. Interacts with the SecYEG preprotein conducting channel. Has a central role in coupling the hydrolysis of ATP to the transfer of proteins into and across the cell membrane, serving both as a receptor for the preprotein-SecB complex and as an ATP-driven molecular motor driving the stepwise translocation of polypeptide chains across the membrane. The sequence is that of Protein translocase subunit SecA from Xanthomonas campestris pv. campestris (strain 8004).